A 1488-amino-acid polypeptide reads, in one-letter code: Indigoidine synthase (1488 aa).

Residues 229-585 (KNRAQRHPEQ…GGDGVARGYL (357 aa)) form an adenylation region. Residues 1137 to 1212 (APRNPLEHQV…KLAAWLSRAR (76 aa)) enclose the Carrier domain. Position 1172 is an O-(pantetheine 4'-phosphoryl)serine (Ser-1172). The interval 1230–1346 (PIYCWPGLGG…ERVAAMNRKA (117 aa)) is thioesterase.

This sequence belongs to the ATP-dependent AMP-binding enzyme family. It depends on pantetheine 4'-phosphate as a cofactor.

It carries out the reaction 2 FMN + 2 L-glutamine + 2 ATP + O2 = indigoidine + 2 FMNH2 + 2 AMP + 2 diphosphate + 2 H2O. The enzyme catalyses FMN + L-glutamine + ATP = 3-amino-1,5-dihydropyridine-2,6-dione + FMNH2 + AMP + diphosphate. It catalyses the reaction 2 3-amino-1,5-dihydropyridine-2,6-dione + O2 = indigoidine + 2 H2O. It functions in the pathway pigment biosynthesis. Nonribosomal peptide synthetase involved in the biosynthesis of the blue pigment indigoidine, which is implicated in pathogenicity and protection from oxidative stress. Catalyzes the synthesis of the blue pigment using L-Gln as a substrate. Two glutamine molecules are cyclized and oxidized to form indigoidine. This chain is Indigoidine synthase, found in Dickeya dadantii (strain 3937) (Erwinia chrysanthemi (strain 3937)).